A 350-amino-acid chain; its full sequence is tRNA uridine(34) hydroxylase (350 aa).

The Rhodanese domain maps to 146–240; that stretch reads DDPDAVFIDM…YARRAREQGL (95 aa). The active-site Cysteine persulfide intermediate is the Cys200. Residues 319 to 328 are compositionally biased toward basic and acidic residues; that stretch reads RRRRAGRENG. Residues 319–350 are disordered; it reads RRRRAGRENGNKIFNKSRGRLNSKLSIPDPAE.

The protein belongs to the TrhO family.

It catalyses the reaction uridine(34) in tRNA + AH2 + O2 = 5-hydroxyuridine(34) in tRNA + A + H2O. Its function is as follows. Catalyzes oxygen-dependent 5-hydroxyuridine (ho5U) modification at position 34 in tRNAs. The polypeptide is tRNA uridine(34) hydroxylase (Salmonella schwarzengrund (strain CVM19633)).